A 79-amino-acid polypeptide reads, in one-letter code: ATP synthase subunit c (79 aa).

Helical transmembrane passes span 11-31 and 53-73; these read MAAA…IGIL and FFIV…LGLY.

It belongs to the ATPase C chain family. As to quaternary structure, F-type ATPases have 2 components, F(1) - the catalytic core - and F(0) - the membrane proton channel. F(1) has five subunits: alpha(3), beta(3), gamma(1), delta(1), epsilon(1). F(0) has three main subunits: a(1), b(2) and c(10-14). The alpha and beta chains form an alternating ring which encloses part of the gamma chain. F(1) is attached to F(0) by a central stalk formed by the gamma and epsilon chains, while a peripheral stalk is formed by the delta and b chains.

Its subcellular location is the cell inner membrane. Its function is as follows. F(1)F(0) ATP synthase produces ATP from ADP in the presence of a proton or sodium gradient. F-type ATPases consist of two structural domains, F(1) containing the extramembraneous catalytic core and F(0) containing the membrane proton channel, linked together by a central stalk and a peripheral stalk. During catalysis, ATP synthesis in the catalytic domain of F(1) is coupled via a rotary mechanism of the central stalk subunits to proton translocation. In terms of biological role, key component of the F(0) channel; it plays a direct role in translocation across the membrane. A homomeric c-ring of between 10-14 subunits forms the central stalk rotor element with the F(1) delta and epsilon subunits. In Serratia proteamaculans (strain 568), this protein is ATP synthase subunit c.